A 1529-amino-acid polypeptide reads, in one-letter code: ABC multidrug transporter AFR2 (1529 aa).

The segment covering 1 to 10 has biased composition (gly residues); sequence MAFAGVGQGL. Residues 1-21 are disordered; it reads MAFAGVGQGLGTYDRTEQTSG. The ABC transporter 1 domain occupies 144 to 394; sequence GALRDLISNR…FVDMGFHCPS (251 aa). 2 N-linked (GlcNAc...) asparagine glycosylation sites follow: N235 and N318. 5 helical membrane-spanning segments follow: residues 505-525, 539-559, 589-609, 614-634, and 648-668; these read LTLT…SVFY, ALLF…ILIL, IPYK…MTNL, GPYF…SMLF, and LAPA…AVNV. An N-linked (GlcNAc...) asparagine glycan is attached at N742. Residues 757-777 form a helical membrane-spanning segment; the sequence is GILIGFFLFFTAIYMTATEFI. Residues 845 to 1087 form the ABC transporter 2 domain; it reads FSWKDVVYDI…ILIDYFEKNG (243 aa). An ATP-binding site is contributed by 881-888; it reads GVSGAGKT. The next 5 helical transmembrane spans lie at 1193-1213, 1227-1247, 1268-1288, 1314-1334, and 1353-1373; these read YIWS…FSFF, FSVF…MPNF, IFIL…GAVI, LMFL…IMIV, and MCLI…FWMF. An N-linked (GlcNAc...) asparagine glycan is attached at N1434. Residues 1465–1485 form a helical membrane-spanning segment; it reads FGLLWAYVVFNIIAAVGIYWL. The interval 1493 to 1529 is disordered; sequence GKEQASEPEGVQEKLVPAQSSEKKRESVSRGSESTAA.

The protein belongs to the ABC transporter superfamily. ABCG family. PDR (TC 3.A.1.205) subfamily.

The protein localises to the cell membrane. It carries out the reaction itraconazole(in) + ATP + H2O = itraconazole(out) + ADP + phosphate + H(+). It catalyses the reaction voriconazole(in) + ATP + H2O = voriconazole(out) + ADP + phosphate + H(+). The catalysed reaction is fluconazole(in) + ATP + H2O = fluconazole(out) + ADP + phosphate + H(+). Functionally, pleiotropic ABC efflux transporter that confers resistance to structurally and functionally unrelated compounds including azoles such as fluconazole (FLC), itraconazole (ITC), posaconazole (POS), and voriconazole (VRC). This Cryptococcus neoformans var. grubii serotype A (strain H99 / ATCC 208821 / CBS 10515 / FGSC 9487) (Filobasidiella neoformans var. grubii) protein is ABC multidrug transporter AFR2.